The primary structure comprises 168 residues: ATP synthase F(1) complex subunit delta, mitochondrial (168 aa).

A mitochondrion-targeting transit peptide spans 1-22; it reads MLPASLLRHPGLRRLMLQARTY. N6-acetyllysine; alternate is present on residues Lys136 and Lys165. 2 positions are modified to N6-succinyllysine; alternate: Lys136 and Lys165.

The protein belongs to the ATPase epsilon chain family. As to quaternary structure, component of the ATP synthase complex composed at least of ATP5F1A/subunit alpha, ATP5F1B/subunit beta, ATP5MC1/subunit c (homooctomer), MT-ATP6/subunit a, MT-ATP8/subunit 8, ATP5ME/subunit e, ATP5MF/subunit f, ATP5MG/subunit g, ATP5MK/subunit k, ATP5MJ/subunit j, ATP5F1C/subunit gamma, ATP5F1D/subunit delta, ATP5F1E/subunit epsilon, ATP5PF/subunit F6, ATP5PB/subunit b, ATP5PD/subunit d, ATP5PO/subunit OSCP. ATP synthase complex consists of a soluble F(1) head domain (subunits alpha(3) and beta(3)) - the catalytic core - and a membrane F(0) domain - the membrane proton channel (subunits c, a, 8, e, f, g, k and j). These two domains are linked by a central stalk (subunits gamma, delta, and epsilon) rotating inside the F1 region and a stationary peripheral stalk (subunits F6, b, d, and OSCP). Component of a complex composed at least by ATPIF1, ATP5F1A, ATP5F1B, ATP5F1C AND ATP5F1E.

It localises to the mitochondrion. It is found in the mitochondrion inner membrane. Its function is as follows. Subunit delta, of the mitochondrial membrane ATP synthase complex (F(1)F(0) ATP synthase or Complex V) that produces ATP from ADP in the presence of a proton gradient across the membrane which is generated by electron transport complexes of the respiratory chain. ATP synthase complex consist of a soluble F(1) head domain - the catalytic core - and a membrane F(1) domain - the membrane proton channel. These two domains are linked by a central stalk rotating inside the F(1) region and a stationary peripheral stalk. During catalysis, ATP synthesis in the catalytic domain of F(1) is coupled via a rotary mechanism of the central stalk subunits to proton translocation. In vivo, can only synthesize ATP although its ATP hydrolase activity can be activated artificially in vitro. With the central stalk subunit gamma, is essential for the biogenesis of F(1) catalytic part of the ATP synthase complex namely in the formation of F1 assembly intermediate. The polypeptide is ATP synthase F(1) complex subunit delta, mitochondrial (Mus musculus (Mouse)).